The sequence spans 75 residues: Protein Tlp homolog (75 aa).

A disordered region spans residues 53–75; sequence REALDGMREEIKDEARDKKNGYM.

This sequence belongs to the Tlp family.

In Clostridium botulinum (strain ATCC 19397 / Type A), this protein is Protein Tlp homolog.